The following is a 300-amino-acid chain: Protoheme IX farnesyltransferase 1 (300 aa).

The next 9 membrane-spanning stretches (helical) occupy residues 28–48 (VVAL…PTIL), 54–74 (VAGL…NHLI), 100–120 (ALLF…VFTN), 122–142 (LTAW…TAYL), 149–169 (NIVI…TAVT), 176–196 (ALLL…ALAI), 222–242 (CILL…LVGM), 243–263 (SGPL…YKAW), and 280–300 (FSIY…YLWA).

Belongs to the UbiA prenyltransferase family. Protoheme IX farnesyltransferase subfamily.

Its subcellular location is the cell inner membrane. The catalysed reaction is heme b + (2E,6E)-farnesyl diphosphate + H2O = Fe(II)-heme o + diphosphate. The protein operates within porphyrin-containing compound metabolism; heme O biosynthesis; heme O from protoheme: step 1/1. Its function is as follows. Converts heme B (protoheme IX) to heme O by substitution of the vinyl group on carbon 2 of heme B porphyrin ring with a hydroxyethyl farnesyl side group. The sequence is that of Protoheme IX farnesyltransferase 1 from Shewanella sp. (strain ANA-3).